Consider the following 318-residue polypeptide: Beta-ketoacyl-[acyl-carrier-protein] synthase III (318 aa).

Residues C112 and H245 contribute to the active site. Positions 246–250 (QANIR) are ACP-binding. Residue N275 is part of the active site.

The protein belongs to the thiolase-like superfamily. FabH family. In terms of assembly, homodimer.

The protein localises to the cytoplasm. The enzyme catalyses malonyl-[ACP] + acetyl-CoA + H(+) = 3-oxobutanoyl-[ACP] + CO2 + CoA. It participates in lipid metabolism; fatty acid biosynthesis. Its function is as follows. Catalyzes the condensation reaction of fatty acid synthesis by the addition to an acyl acceptor of two carbons from malonyl-ACP. Catalyzes the first condensation reaction which initiates fatty acid synthesis and may therefore play a role in governing the total rate of fatty acid production. Possesses both acetoacetyl-ACP synthase and acetyl transacylase activities. Its substrate specificity determines the biosynthesis of branched-chain and/or straight-chain of fatty acids. This chain is Beta-ketoacyl-[acyl-carrier-protein] synthase III, found in Rickettsia conorii (strain ATCC VR-613 / Malish 7).